Consider the following 443-residue polypeptide: Tol-Pal system protein TolB (443 aa).

Residues 1 to 31 (MMIMTTRTFFSWFIVICAFWLTSFSSVPVHA) form the signal peptide. A disordered region spans residues 422-443 (ERQLPTPNDASDPAWSPLLNIQ).

This sequence belongs to the TolB family. The Tol-Pal system is composed of five core proteins: the inner membrane proteins TolA, TolQ and TolR, the periplasmic protein TolB and the outer membrane protein Pal. They form a network linking the inner and outer membranes and the peptidoglycan layer.

The protein resides in the periplasm. Functionally, part of the Tol-Pal system, which plays a role in outer membrane invagination during cell division and is important for maintaining outer membrane integrity. The protein is Tol-Pal system protein TolB of Bartonella henselae (strain ATCC 49882 / DSM 28221 / CCUG 30454 / Houston 1) (Rochalimaea henselae).